The following is a 196-amino-acid chain: Aequorin-1 (196 aa).

Residues 1 to 7 constitute a propeptide that is removed on maturation; the sequence is MTSEQYS. EF-hand domains are found at residues 18–53, 54–108, 111–146, and 147–182; these read KWIGRHKHMFNFLDVNHNGRISLDEMVYKASDIVIN, NLGA…SKNQ, LIRLWGDALFDIIDKDQNGAISLDEWKAYTKSDGII, and QSSEDCEETFRVCDIDESGQLDVDEMTRQHLGFWYT. Ca(2+)-binding residues include aspartate 31, asparagine 33, asparagine 35, arginine 37, and glutamate 42. May interact with the chromophore stretches follow at residues 47–57, 62–72, and 107–117; these read ASDIVINNLGA, AKRHKDAVEAF, and NQITLIRLWGD. The Ca(2+) site is built by aspartate 124, aspartate 126, asparagine 128, glutamate 135, aspartate 160, aspartate 162, serine 164, glutamine 166, and glutamate 171.

The protein belongs to the aequorin family. In terms of processing, the reduction of the disulfide bond is necessary to regenerate aequorin from apoaequorin.

In terms of biological role, ca(2+)-dependent bioluminescence photoprotein. Displays an emission peak at 470 nm (blue light). Trace amounts of calcium ion trigger the intramolecular oxidation of the chromophore, coelenterazine into coelenteramide and CO(2) with the concomitant emission of light. The sequence is that of Aequorin-1 from Aequorea victoria (Water jellyfish).